The sequence spans 351 residues: Phospho-N-acetylmuramoyl-pentapeptide-transferase (351 aa).

10 helical membrane passes run 17–37, 62–82, 85–105, 130–150, 158–178, 190–210, 230–250, 254–274, 279–299, and 328–348; these read MAYATIFAFLLSLIVGPYIIL, GIPTMGGILIFFCVFISLVFW, ILNVYFLIMVFVMLGFAFLGF, IIFSFFSVGILYYFGGEHVSV, SFQIDLGLFYIPFGMFILISA, GLAIGLSIVITGALIIIAYLT, LVIFLGALLGGSFGFLWFNAY, IMMGDTGSLALGAILGMAALI, ILFSILAGVFIIETMSVIIQV, and QVVIRFWIIGLIFAIIALSTI.

This sequence belongs to the glycosyltransferase 4 family. MraY subfamily. Requires Mg(2+) as cofactor.

It localises to the cell inner membrane. The enzyme catalyses UDP-N-acetyl-alpha-D-muramoyl-L-alanyl-gamma-D-glutamyl-meso-2,6-diaminopimeloyl-D-alanyl-D-alanine + di-trans,octa-cis-undecaprenyl phosphate = di-trans,octa-cis-undecaprenyl diphospho-N-acetyl-alpha-D-muramoyl-L-alanyl-D-glutamyl-meso-2,6-diaminopimeloyl-D-alanyl-D-alanine + UMP. It functions in the pathway cell wall biogenesis; peptidoglycan biosynthesis. In terms of biological role, catalyzes the initial step of the lipid cycle reactions in the biosynthesis of the cell wall peptidoglycan: transfers peptidoglycan precursor phospho-MurNAc-pentapeptide from UDP-MurNAc-pentapeptide onto the lipid carrier undecaprenyl phosphate, yielding undecaprenyl-pyrophosphoryl-MurNAc-pentapeptide, known as lipid I. The sequence is that of Phospho-N-acetylmuramoyl-pentapeptide-transferase from Borreliella burgdorferi (strain ATCC 35210 / DSM 4680 / CIP 102532 / B31) (Borrelia burgdorferi).